A 720-amino-acid chain; its full sequence is Phosphate acetyltransferase (720 aa).

The segment at 389 to 720 (AFRHELVQKS…LEAKAAALAS (332 aa)) is phosphate acetyltransferase.

The protein in the N-terminal section; belongs to the CobB/CobQ family. In the C-terminal section; belongs to the phosphate acetyltransferase and butyryltransferase family. Homohexamer.

The protein resides in the cytoplasm. The catalysed reaction is acetyl-CoA + phosphate = acetyl phosphate + CoA. It functions in the pathway metabolic intermediate biosynthesis; acetyl-CoA biosynthesis; acetyl-CoA from acetate: step 2/2. In terms of biological role, involved in acetate metabolism. In Acinetobacter baylyi (strain ATCC 33305 / BD413 / ADP1), this protein is Phosphate acetyltransferase (pta).